A 520-amino-acid polypeptide reads, in one-letter code: Transactivator/viroplasmin protein (520 aa).

The interval 486 to 520 (VQDASADSGPKDGPPPTRSIVEKEDVPTTSSKQVD) is disordered.

The protein belongs to the caulimoviridae viroplasmin family.

It is found in the host cytoplasm. In terms of biological role, enhances the ribosomal termination-reinitiation event leading to the translation of major open reading frames on the polycistronic viral RNAs. The chain is Transactivator/viroplasmin protein from Cauliflower mosaic virus (strain NY8153) (CaMV).